Consider the following 393-residue polypeptide: Probable N-acetyl-LL-diaminopimelate aminotransferase (393 aa).

At Lys-231 the chain carries N6-(pyridoxal phosphate)lysine.

Belongs to the class-I pyridoxal-phosphate-dependent aminotransferase family. As to quaternary structure, homodimer. The cofactor is pyridoxal 5'-phosphate.

It is found in the cytoplasm. The enzyme catalyses N-acetyl-(2S,6S)-2,6-diaminopimelate + 2-oxoglutarate = L-2-acetamido-6-oxoheptanedioate + L-glutamate. It participates in amino-acid biosynthesis; L-lysine biosynthesis via DAP pathway; LL-2,6-diaminopimelate from (S)-tetrahydrodipicolinate (acetylase route): step 2/3. Its function is as follows. Essential for murein biosynthesis. Probably catalyzes the conversion of L-2-acetamido-6-oxopimelate to N-acetyl-LL-2,6-diaminopimelate. This is Probable N-acetyl-LL-diaminopimelate aminotransferase from Bacillus subtilis (strain 168).